The following is a 158-amino-acid chain: SsrA-binding protein (158 aa).

The disordered stretch occupies residues 133–158 (QLHDKRETEKKRDWNKEKGRLLRDKH).

This sequence belongs to the SmpB family.

The protein localises to the cytoplasm. Functionally, required for rescue of stalled ribosomes mediated by trans-translation. Binds to transfer-messenger RNA (tmRNA), required for stable association of tmRNA with ribosomes. tmRNA and SmpB together mimic tRNA shape, replacing the anticodon stem-loop with SmpB. tmRNA is encoded by the ssrA gene; the 2 termini fold to resemble tRNA(Ala) and it encodes a 'tag peptide', a short internal open reading frame. During trans-translation Ala-aminoacylated tmRNA acts like a tRNA, entering the A-site of stalled ribosomes, displacing the stalled mRNA. The ribosome then switches to translate the ORF on the tmRNA; the nascent peptide is terminated with the 'tag peptide' encoded by the tmRNA and targeted for degradation. The ribosome is freed to recommence translation, which seems to be the essential function of trans-translation. This is SsrA-binding protein from Beijerinckia indica subsp. indica (strain ATCC 9039 / DSM 1715 / NCIMB 8712).